Consider the following 161-residue polypeptide: Globin CTT-VIIB-5/CTT-VIIB-9 (161 aa).

Residues 1–16 (MKFFAVLALCIVGAIA) form the signal peptide. A Globin domain is found at 18 to 161 (PLTADEASLV…NTFAIVVPRL (144 aa)). Heme b contacts are provided by His76 and His111.

Belongs to the globin family. Homodimer.

This Chironomus thummi thummi (Midge) protein is Globin CTT-VIIB-5/CTT-VIIB-9 (CTT-7B5).